A 411-amino-acid polypeptide reads, in one-letter code: Nuclear receptor subfamily 2 group F member 1-A (411 aa).

The disordered stretch occupies residues 1-68; the sequence is MAMVVSVWRD…AGDKGSQNSG (68 aa). Low complexity predominate over residues 24–46; it reads NPAAQPAREQQQAASAAPHTPQT. The nuclear receptor DNA-binding region spans 73–148; it reads HIECVVCGDK…VGMRREAVQR (76 aa). 2 NR C4-type zinc fingers span residues 76-96 and 112-136; these read CVVC…CEGC and CRAN…LKKC. The region spanning 174–400 is the NR LBD domain; sequence YLSGYISLLL…TLIRDMLLSG (227 aa).

Belongs to the nuclear hormone receptor family. NR2 subfamily. As to expression, first expressed in 11-12 hour embryos. In the rostral brain of 13 hour embryos, expressed within the anterior half of the midbrain and the posterior part of the diencephalon. In the presumptive hindbrain, expressed in a segment-like stripe in the anterior region, resembling the presumptive rhombomere units of the hindbrain. Also detected in the intermediate mesoderm, posterior to the first somite. As somitogenesis proceeds, expression extends posteriorly and flanks the 10 most anterior somites. Expression changes extensively both in level and expansion of domains between 13 and 20 hours. In the rostral brain, expression extends to include a major part of the diencephalon and a caudal portion of the telencephalon. Within the hindbrain, strongly expressed in the two most anterior rhombomeres, and a lower but uniform expression is seen to extend throughout rhombomere 7. In 28 hour embryos, higher and more uniform expression is seen in both rostral and hindbrain areas. Also expressed in the retina of the eye.

It localises to the nucleus. In terms of biological role, putative transcription factor that is required in photoreceptor cells precursors during eye development. This Danio rerio (Zebrafish) protein is Nuclear receptor subfamily 2 group F member 1-A (nr2f1a).